Here is a 408-residue protein sequence, read N- to C-terminus: tRNA-specific 2-thiouridylase MnmA (408 aa).

ATP-binding positions include 38-45 (GMSGGVDS) and methionine 64. An interaction with target base in tRNA region spans residues 124-126 (NPD). Cysteine 129 functions as the Nucleophile in the catalytic mechanism. A disulfide bridge links cysteine 129 with cysteine 231. Glycine 153 is a binding site for ATP. The interaction with tRNA stretch occupies residues 181-183 (KDQ). The active-site Cysteine persulfide intermediate is cysteine 231. Positions 348–349 (RY) are interaction with tRNA.

This sequence belongs to the MnmA/TRMU family.

It localises to the cytoplasm. The catalysed reaction is S-sulfanyl-L-cysteinyl-[protein] + uridine(34) in tRNA + AH2 + ATP = 2-thiouridine(34) in tRNA + L-cysteinyl-[protein] + A + AMP + diphosphate + H(+). Its function is as follows. Catalyzes the 2-thiolation of uridine at the wobble position (U34) of tRNA, leading to the formation of s(2)U34. The chain is tRNA-specific 2-thiouridylase MnmA from Psychrobacter arcticus (strain DSM 17307 / VKM B-2377 / 273-4).